Here is a 524-residue protein sequence, read N- to C-terminus: RNA-binding protein 39 (524 aa).

The interval 1 to 146 (MADDIDIEAM…PVREPIDNLT (146 aa)) is disordered. Ala-2 is subject to N-acetylalanine. A compositionally biased stretch (basic and acidic residues) spans 14 to 32 (PYKKDENKLSSANGHEERS). Basic residues-rich tracts occupy residues 33–56 (KKRK…KERK) and 64–95 (KKSK…RGRY). Tyr-95 carries the post-translational modification Phosphotyrosine. Residues Ser-97 and Ser-100 each carry the phosphoserine modification. Residue Lys-111 forms a Glycyl lysine isopeptide (Lys-Gly) (interchain with G-Cter in SUMO2) linkage. Ser-117 carries the phosphoserine modification. Residue Lys-119 forms a Glycyl lysine isopeptide (Lys-Gly) (interchain with G-Cter in SUMO2) linkage. The segment covering 119–130 (KLSRRRSRSKSP) has biased composition (basic residues). Ser-121 and Ser-136 each carry phosphoserine. Residues 131 to 146 (FRKDKSPVREPIDNLT) show a composition bias toward basic and acidic residues. Thr-146 is modified (phosphothreonine). Residues 153-230 (RTVFCMQLAA…VPIIVQASQA (78 aa)) enclose the RRM 1 domain. Residue Lys-244 forms a Glycyl lysine isopeptide (Lys-Gly) (interchain with G-Cter in SUMO2) linkage. The 79-residue stretch at 250-328 (MRLYVGSLHF…RPMKVGHVTE (79 aa)) folds into the RRM 2 domain. The interval 291-355 (KGYGFITFSD…RTGIDLGTTG (65 aa)) is activating domain. The tract at residues 291 to 400 (KGYGFITFSD…ADLQTRLSQQ (110 aa)) is interaction with JUN. Phosphoserine is present on residues Ser-334, Ser-337, and Ser-341. The tract at residues 355–400 (GRLQLMARLAEGTGLQIPPAAQQALQMSGSLAFGAVADLQTRLSQQ) is interaction with ESR1 and ESR2. The interaction with NCOA6 stretch occupies residues 400–524 (QTEASALAAA…ATQLLVPSRR (125 aa)). Residues 439–502 (EIKDDVIEEC…KMITAAYVPL (64 aa)) form the RRM 3 domain.

The protein belongs to the splicing factor SR family. Interacts with NCOA6 and JUN. Interacts with ESR1 and ESR2, in the presence of estradiol (E2). Interacts with RSRC1 (via Arg/Ser-rich domain). Interacts with SF3B1. Interacts with ZNF106 (via N-terminus).

It localises to the nucleus speckle. RNA-binding protein that acts as a pre-mRNA splicing factor. Acts by promoting exon inclusion via regulation of exon cassette splicing. Also acts as a transcriptional coactivator for steroid nuclear receptors ESR1/ER-alpha and ESR2/ER-beta, and JUN/AP-1, independently of the pre-mRNA splicing factor activity. This is RNA-binding protein 39 (RBM39) from Pongo abelii (Sumatran orangutan).